Consider the following 261-residue polypeptide: Ribonuclease PH (261 aa).

Phosphate is bound by residues arginine 87 and 125–127 (GTR).

It belongs to the RNase PH family. As to quaternary structure, homohexameric ring arranged as a trimer of dimers.

The catalysed reaction is tRNA(n+1) + phosphate = tRNA(n) + a ribonucleoside 5'-diphosphate. In terms of biological role, phosphorolytic 3'-5' exoribonuclease that plays an important role in tRNA 3'-end maturation. Removes nucleotide residues following the 3'-CCA terminus of tRNAs; can also add nucleotides to the ends of RNA molecules by using nucleoside diphosphates as substrates, but this may not be physiologically important. Probably plays a role in initiation of 16S rRNA degradation (leading to ribosome degradation) during starvation. This is Ribonuclease PH from Desulforudis audaxviator (strain MP104C).